A 361-amino-acid polypeptide reads, in one-letter code: uncharacterized protein (361 aa).

A Phosphothreonine modification is found at threonine 12.

It is found in the cytoplasm. The protein localises to the nucleus. This is an uncharacterized protein from Schizosaccharomyces pombe (strain 972 / ATCC 24843) (Fission yeast).